Consider the following 445-residue polypeptide: Na(+)-translocating NADH-quinone reductase subunit A (445 aa).

It belongs to the NqrA family. In terms of assembly, composed of six subunits; NqrA, NqrB, NqrC, NqrD, NqrE and NqrF.

The enzyme catalyses a ubiquinone + n Na(+)(in) + NADH + H(+) = a ubiquinol + n Na(+)(out) + NAD(+). Functionally, NQR complex catalyzes the reduction of ubiquinone-1 to ubiquinol by two successive reactions, coupled with the transport of Na(+) ions from the cytoplasm to the periplasm. NqrA to NqrE are probably involved in the second step, the conversion of ubisemiquinone to ubiquinol. This is Na(+)-translocating NADH-quinone reductase subunit A from Pseudomonas aeruginosa (strain ATCC 15692 / DSM 22644 / CIP 104116 / JCM 14847 / LMG 12228 / 1C / PRS 101 / PAO1).